Consider the following 1216-residue polypeptide: Probable phospholipid-transporting ATPase 4 (1216 aa).

The Cytoplasmic portion of the chain corresponds to 1 to 74 (MARGRIRSKL…TTRYNLITFF (74 aa)). The helical transmembrane segment at 75-96 (PKCLYEQFHRAANFYFLVAAIL) threads the bilayer. At 97–100 (SVFP) the chain is on the extracellular side. Residues 101–123 (LSPFNKWSMIAPLVFVVGLSMLK) traverse the membrane as a helical segment. Topologically, residues 124-305 (EALEDWSRFM…SRIEKTMDYI (182 aa)) are cytoplasmic. The helical transmembrane segment at 306–327 (IYTLLVLLILISCISSSGFAWE) threads the bilayer. At 328–359 (TKFHMPKWWYLRPEEPENLTNPSNPVYAGFVH) the chain is on the extracellular side. The helical transmembrane segment at 360–377 (LITALLLYGYLIPISLYV) threads the bilayer. At 378-922 (SIEVVKVLQA…HGHWCYKRIA (545 aa)) the chain is on the cytoplasmic side. Asp-425 serves as the catalytic 4-aspartylphosphate intermediate. Lys-605 is covalently cross-linked (Glycyl lysine isopeptide (Lys-Gly) (interchain with G-Cter in ubiquitin)). Mg(2+)-binding residues include Asp-867 and Asp-871. Residues 923–942 (QMICYFFYKNIAFGLTLFYF) traverse the membrane as a helical segment. Residues 943 to 956 (EAFTGFSGQSVYND) are Extracellular-facing. Residues 957-976 (YYLLLFNVVLTSLPVIALGV) form a helical membrane-spanning segment. Residues 977-1006 (FEQDVSSEICLQFPALYQQGKKNLFFDWYR) lie on the Cytoplasmic side of the membrane. A helical membrane pass occupies residues 1007 to 1029 (ILGWMGNGVYSSLVIFFLNIGII). Residues 1030 to 1042 (YEQAFRVSGQTAD) are Extracellular-facing. A helical transmembrane segment spans residues 1043 to 1065 (MDAVGTTMFTCIIWAVNVQIALT). The Cytoplasmic segment spans residues 1066-1071 (VSHFTW). A helical membrane pass occupies residues 1072-1092 (IQHVLIWGSIGLWYLFVALYG). Over 1093–1109 (MMPPSLSGNIYRILVEI) the chain is Extracellular. A helical membrane pass occupies residues 1110–1134 (LAPAPIYWIATFLVTVTTVLPYFAH). The Cytoplasmic segment spans residues 1135-1216 (ISFQRFLHPL…TQDTMSPRSV (82 aa)). Residues 1195–1216 (LNKKQSNMSQFSTQDTMSPRSV) form a disordered region. The span at 1198 to 1216 (KQSNMSQFSTQDTMSPRSV) shows a compositional bias: polar residues.

The protein belongs to the cation transport ATPase (P-type) (TC 3.A.3) family. Type IV subfamily.

It is found in the membrane. The enzyme catalyses ATP + H2O + phospholipidSide 1 = ADP + phosphate + phospholipidSide 2.. Functionally, involved in transport of phospholipids. This Arabidopsis thaliana (Mouse-ear cress) protein is Probable phospholipid-transporting ATPase 4.